Here is a 175-residue protein sequence, read N- to C-terminus: Probable chemoreceptor glutamine deamidase CheD (175 aa).

The protein belongs to the CheD family.

It catalyses the reaction L-glutaminyl-[protein] + H2O = L-glutamyl-[protein] + NH4(+). In terms of biological role, probably deamidates glutamine residues to glutamate on methyl-accepting chemotaxis receptors (MCPs), playing an important role in chemotaxis. This Jannaschia sp. (strain CCS1) protein is Probable chemoreceptor glutamine deamidase CheD.